Here is a 357-residue protein sequence, read N- to C-terminus: Protein RecA (357 aa).

Residue 67–74 (GPESSGKT) participates in ATP binding. The interval 332–357 (PSAMSSSSSDDENSEGNVDFETGEVF) is disordered.

This sequence belongs to the RecA family.

Its subcellular location is the cytoplasm. Functionally, can catalyze the hydrolysis of ATP in the presence of single-stranded DNA, the ATP-dependent uptake of single-stranded DNA by duplex DNA, and the ATP-dependent hybridization of homologous single-stranded DNAs. It interacts with LexA causing its activation and leading to its autocatalytic cleavage. The polypeptide is Protein RecA (Shewanella sp. (strain ANA-3)).